A 628-amino-acid polypeptide reads, in one-letter code: DEAD-box ATP-dependent RNA helicase 9 (628 aa).

The Q motif signature appears at 98-126; sequence LEVAKLGISPKIVSQLASRGITKLFPIQR. The Helicase ATP-binding domain occupies 129–302; sequence LEPAMQGKDM…QKYLKNPVTI (174 aa). Residue 142-149 participates in ATP binding; sequence AKTGTGKT. The DEAD box motif lies at 250–253; the sequence is DEAD. The Helicase C-terminal domain maps to 331–478; it reads VLGELIKEHA…KINVEGSDLM (148 aa). Disordered regions lie at residues 496–548 and 571–628; these read GSYG…SGFG and SGFG…FGSS. The span at 500–509 shows a compositional bias: low complexity; that stretch reads RRGSFGSSSS. Positions 510–548 are enriched in gly residues; that stretch reads RGGGFGDSGFGRSGGGFGRSGGGGFGRSSGGGFGDSGFG.

Belongs to the DEAD box helicase family. DDX21/DDX50 subfamily.

It catalyses the reaction ATP + H2O = ADP + phosphate + H(+). This Oryza sativa subsp. japonica (Rice) protein is DEAD-box ATP-dependent RNA helicase 9.